Reading from the N-terminus, the 367-residue chain is Lipoyl synthase 2, chloroplastic (367 aa).

7 residues coordinate [4Fe-4S] cluster: C84, C89, C95, C121, C125, C128, and S336. A Radical SAM core domain is found at 104–325 (GEGDGIATAT…KEYGESVGFR (222 aa)).

The protein belongs to the radical SAM superfamily. Lipoyl synthase family. The cofactor is [4Fe-4S] cluster.

The protein resides in the plastid. It localises to the chloroplast. The enzyme catalyses [[Fe-S] cluster scaffold protein carrying a second [4Fe-4S](2+) cluster] + N(6)-octanoyl-L-lysyl-[protein] + 2 oxidized [2Fe-2S]-[ferredoxin] + 2 S-adenosyl-L-methionine + 4 H(+) = [[Fe-S] cluster scaffold protein] + N(6)-[(R)-dihydrolipoyl]-L-lysyl-[protein] + 4 Fe(3+) + 2 hydrogen sulfide + 2 5'-deoxyadenosine + 2 L-methionine + 2 reduced [2Fe-2S]-[ferredoxin]. The protein operates within protein modification; protein lipoylation via endogenous pathway; protein N(6)-(lipoyl)lysine from octanoyl-[acyl-carrier-protein]: step 2/2. Catalyzes the radical-mediated insertion of two sulfur atoms into the C-6 and C-8 positions of the octanoyl moiety bound to the lipoyl domains of lipoate-dependent enzymes, thereby converting the octanoylated domains into lipoylated derivatives. This is Lipoyl synthase 2, chloroplastic from Zea mays (Maize).